The following is a 293-amino-acid chain: Small ribosomal subunit biogenesis GTPase RsgA (293 aa).

The 161-residue stretch at 63–223 (KNELVRPPIA…VADTPGFSSL (161 aa)) folds into the CP-type G domain. Residues 112-115 (SKMD) and 166-174 (GQSGVGKSS) each bind GTP. Positions 247, 252, 254, and 260 each coordinate Zn(2+).

This sequence belongs to the TRAFAC class YlqF/YawG GTPase family. RsgA subfamily. In terms of assembly, monomer. Associates with 30S ribosomal subunit, binds 16S rRNA. The cofactor is Zn(2+).

The protein localises to the cytoplasm. Functionally, one of several proteins that assist in the late maturation steps of the functional core of the 30S ribosomal subunit. Helps release RbfA from mature subunits. May play a role in the assembly of ribosomal proteins into the subunit. Circularly permuted GTPase that catalyzes slow GTP hydrolysis, GTPase activity is stimulated by the 30S ribosomal subunit. The polypeptide is Small ribosomal subunit biogenesis GTPase RsgA (Bacillus cytotoxicus (strain DSM 22905 / CIP 110041 / 391-98 / NVH 391-98)).